A 129-amino-acid chain; its full sequence is Small ribosomal subunit protein uS13 (129 aa).

Residues 95-114 are compositionally biased toward basic residues; it reads NLPVRGQRTKTNARTRRGPR. Residues 95–129 form a disordered region; that stretch reads NLPVRGQRTKTNARTRRGPRKTVAGRGQKRGATKK.

This sequence belongs to the universal ribosomal protein uS13 family. Part of the 30S ribosomal subunit. Forms a loose heterodimer with protein S19. Forms two bridges to the 50S subunit in the 70S ribosome.

Located at the top of the head of the 30S subunit, it contacts several helices of the 16S rRNA. In the 70S ribosome it contacts the 23S rRNA (bridge B1a) and protein L5 of the 50S subunit (bridge B1b), connecting the 2 subunits; these bridges are implicated in subunit movement. Contacts the tRNAs in the A and P-sites. The sequence is that of Small ribosomal subunit protein uS13 from Dehalococcoides mccartyi (strain ATCC BAA-2100 / JCM 16839 / KCTC 5957 / BAV1).